The sequence spans 105 residues: Large ribosomal subunit protein eL30 (105 aa).

It belongs to the eukaryotic ribosomal protein eL30 family.

This Candida glabrata (strain ATCC 2001 / BCRC 20586 / JCM 3761 / NBRC 0622 / NRRL Y-65 / CBS 138) (Yeast) protein is Large ribosomal subunit protein eL30 (RPL30).